We begin with the raw amino-acid sequence, 220 residues long: Response regulator protein TmoT (220 aa).

Positions Val-21 to Leu-135 constitute a Response regulatory domain. 4-aspartylphosphate is present on Asp-70. The 66-residue stretch at Leu-151–Lys-216 folds into the HTH luxR-type domain. Positions Asn-175–His-194 form a DNA-binding region, H-T-H motif.

Post-translationally, phosphorylated by TmoS.

It localises to the cytoplasm. Functionally, member of the two-component regulatory system TmoS/TmoT involved in the regulation of toluene degradation. Induces expression of tmoX operon. In Ectopseudomonas mendocina (Pseudomonas mendocina), this protein is Response regulator protein TmoT (tmoT).